Reading from the N-terminus, the 469-residue chain is MTQDSALLKAPEQTLRDGSNSRKVFIKTYGCQMNVYDSTRMSDALARDGYEPTEDMEEADLVLLNTCHIREKAAEKVYSALGRLREMKKKKAADGREMMIGVAGCVAQAEGEEILRRAPAVDVVIGPQTYHRLPEALRRAKEGQRVVDTEYAIEDKFEHLPVAESRKIRARGVTAFLTVQEGCDKFCTFCVVPYTRGSEVSRPVSQIVEEAEKLVEGGVREITLLGQNVNAWHGAGPRGEAWSLGDLLYRLAEIPGLARLRYTTSHPRDMDDRLIAAHRDLRALMPYLHLPVQSGSDRILKAMNRRHTAAEYLSLIERIRAVRPDIALSGDFITGFPGETDKDFEDTLRLVEEVRYAQAFSFKYSTRPGTPGAELKDQVPEEIKAERLERLQALLLKQQQEFAESCIGKEIDLLLEKPGRMPGQLIGRSPWLQSVNVDAKASQIGDIIKVRITGTGTNSLFAERAEAAV.

The region spanning 22 to 142 (RKVFIKTYGC…LPEALRRAKE (121 aa)) is the MTTase N-terminal domain. The [4Fe-4S] cluster site is built by C31, C67, C105, C183, C187, and C190. The Radical SAM core domain occupies 169-401 (RARGVTAFLT…QALLLKQQQE (233 aa)). Positions 404 to 466 (ESCIGKEIDL…TNSLFAERAE (63 aa)) constitute a TRAM domain.

The protein belongs to the methylthiotransferase family. MiaB subfamily. As to quaternary structure, monomer. [4Fe-4S] cluster serves as cofactor.

The protein localises to the cytoplasm. The enzyme catalyses N(6)-dimethylallyladenosine(37) in tRNA + (sulfur carrier)-SH + AH2 + 2 S-adenosyl-L-methionine = 2-methylsulfanyl-N(6)-dimethylallyladenosine(37) in tRNA + (sulfur carrier)-H + 5'-deoxyadenosine + L-methionine + A + S-adenosyl-L-homocysteine + 2 H(+). Catalyzes the methylthiolation of N6-(dimethylallyl)adenosine (i(6)A), leading to the formation of 2-methylthio-N6-(dimethylallyl)adenosine (ms(2)i(6)A) at position 37 in tRNAs that read codons beginning with uridine. The polypeptide is tRNA-2-methylthio-N(6)-dimethylallyladenosine synthase (Rhizobium etli (strain ATCC 51251 / DSM 11541 / JCM 21823 / NBRC 15573 / CFN 42)).